A 1182-amino-acid polypeptide reads, in one-letter code: Lysine-specific demethylase hairless (1182 aa).

Disordered stretches follow at residues 227–257, 302–380, 411–443, and 507–546; these read LGLA…GAGR, YQLG…KKTW, AGSP…ARAW, and TGHS…ASLN. Pro residues predominate over residues 307–321; that stretch reads PATPRCPSPGPPTPP. Residues 561-565 carry the LXXLL motif 1 motif; sequence LCRLL. The segment at 595–620 adopts a C6-type zinc-finger fold; it reads CSRCHHGLFNTHWRCSHCSHRLCVAC. The disordered stretch occupies residues 697–746; that stretch reads GDGGQQKEPTEKTPPTPQPSCNGDSNRTKDIKEETPDSTESPAEDGAGRS. The segment covering 722–731 has biased composition (basic and acidic residues); that stretch reads NRTKDIKEET. Positions 753–757 match the LXXLL motif 2 motif; it reads LCELL. The region spanning 939-1150 is the JmjC domain; that stretch reads DASRVQNLAS…LSAQLYHQGA (212 aa). Residues C1000, E1002, and H1118 each contribute to the Fe cation site.

The cofactor is Fe(2+). In terms of tissue distribution, expressed predominantly in brain, hair follicles and interfollicular epidermis. No expression in dermis.

It localises to the nucleus. It catalyses the reaction N(6),N(6)-dimethyl-L-lysyl(9)-[histone H3] + 2 2-oxoglutarate + 2 O2 = L-lysyl(9)-[histone H3] + 2 formaldehyde + 2 succinate + 2 CO2. Histone demethylase that specifically demethylates both mono- and dimethylated 'Lys-9' of histone H3. May act as a transcription regulator controlling hair biology (via targeting of collagens), neural activity, and cell cycle. The chain is Lysine-specific demethylase hairless (Hr) from Mus musculus (Mouse).